Consider the following 91-residue polypeptide: Uteroglobin (91 aa).

Residues 1–21 form the signal peptide; it reads MKLAITLALVTLALLCSPASA.

This sequence belongs to the secretoglobin family. Antiparallel homodimer; disulfide-linked. Interaction with LMBR1L is controversial. In terms of tissue distribution, synthesized in the uterus and lung.

Its subcellular location is the secreted. Functionally, uteroglobin binds progesterone specifically and with high affinity. It may regulate progesterone concentrations reaching the blastocyst. It is also a potent inhibitor of phospholipase A2. The polypeptide is Uteroglobin (SCGB1A1) (Oryctolagus cuniculus (Rabbit)).